We begin with the raw amino-acid sequence, 121 residues long: Ribonuclease P protein component (121 aa).

This sequence belongs to the RnpA family. Consists of a catalytic RNA component (M1 or rnpB) and a protein subunit.

The enzyme catalyses Endonucleolytic cleavage of RNA, removing 5'-extranucleotides from tRNA precursor.. Its function is as follows. RNaseP catalyzes the removal of the 5'-leader sequence from pre-tRNA to produce the mature 5'-terminus. It can also cleave other RNA substrates such as 4.5S RNA. The protein component plays an auxiliary but essential role in vivo by binding to the 5'-leader sequence and broadening the substrate specificity of the ribozyme. The chain is Ribonuclease P protein component from Lactobacillus delbrueckii subsp. bulgaricus (strain ATCC 11842 / DSM 20081 / BCRC 10696 / JCM 1002 / NBRC 13953 / NCIMB 11778 / NCTC 12712 / WDCM 00102 / Lb 14).